Here is a 380-residue protein sequence, read N- to C-terminus: SAM and SH3 domain-containing protein 3 (380 aa).

The interval 1–174 is disordered; it reads MLRRKPSNAS…STAPQYTGPF (174 aa). Residues 22–41 are compositionally biased toward low complexity; sequence LQRSSSFKDFAKSKPSSPVV. 3 positions are modified to phosphoserine: S27, S34, and S42. A Phosphothreonine modification is found at T61. A compositionally biased stretch (basic residues) spans 84–93; that stretch reads MNRKTGKKMV. S97 carries the phosphoserine modification. T103 carries the post-translational modification Phosphothreonine. The residue at position 110 (S110) is a Phosphoserine. T112 carries the post-translational modification Phosphothreonine. S113 and S120 each carry phosphoserine. Residues 143 to 158 show a composition bias toward polar residues; sequence RQASTGSELCSPSPGS. An SH3 domain is found at 173-234; sequence PFCGRARVHT…KFIYVDVLPE (62 aa). An SAM domain is found at 252–316; it reads PKPKTLHELL…LTAAELLLDY (65 aa). Phosphothreonine is present on T318. Residues 318-327 are compositionally biased toward acidic residues; the sequence is TGSEEAEEGT. Positions 318–380 are disordered; the sequence is TGSEEAEEGT…LHGLSLSGAP (63 aa). S320 bears the Phosphoserine mark.

It belongs to the SASH family.

Functionally, may function as a signaling adapter protein in lymphocytes. The sequence is that of SAM and SH3 domain-containing protein 3 from Bos taurus (Bovine).